The following is a 261-amino-acid chain: 3-hydroxyacyl-CoA dehydrogenase type-2 (261 aa).

Residue Ala-2 is modified to N-acetylalanine. Residues Ser-20, Leu-22, and Asp-41 each coordinate NAD(+). At Lys-53 the chain carries N6-acetyllysine; alternate. Lys-53 bears the N6-succinyllysine; alternate mark. NAD(+) is bound at residue Val-65. Position 69 is an N6-acetyllysine (Lys-69). An NAD(+)-binding site is contributed by Cys-91. An N6-acetyllysine mark is found at Lys-99 and Lys-105. Ser-155 lines the substrate pocket. Residues Tyr-168, Lys-172, Phe-201, and Thr-203 each coordinate NAD(+). The active-site Proton acceptor is the Tyr-168. An N6-acetyllysine; alternate modification is found at Lys-212. Lys-212 bears the N6-succinyllysine; alternate mark.

This sequence belongs to the short-chain dehydrogenases/reductases (SDR) family. Homotetramer. Component of mitochondrial ribonuclease P, a complex composed of TRMT10C/MRPP1, HSD17B10/MRPP2 and PRORP/MRPP3. Interacts with TRMT10C/MRPP1; forming the MRPP1-MRPP2 subcomplex of the mitochondrial ribonuclease P complex.

The protein resides in the mitochondrion. Its subcellular location is the mitochondrion matrix. It localises to the mitochondrion nucleoid. The catalysed reaction is a (3S)-3-hydroxyacyl-CoA + NAD(+) = a 3-oxoacyl-CoA + NADH + H(+). It catalyses the reaction (2S,3S)-3-hydroxy-2-methylbutanoyl-CoA + NAD(+) = 2-methyl-3-oxobutanoyl-CoA + NADH + H(+). It carries out the reaction testosterone + NAD(+) = androst-4-ene-3,17-dione + NADH + H(+). The enzyme catalyses 5alpha-androstane-3alpha,17beta-diol + NAD(+) = 17beta-hydroxy-5alpha-androstan-3-one + NADH + H(+). The catalysed reaction is 17beta-estradiol + NAD(+) = estrone + NADH + H(+). It catalyses the reaction cholate + NAD(+) = 3alpha,12alpha-dihydroxy-7-oxo-5beta-cholanate + NADH + H(+). It carries out the reaction (3S)-3-hydroxybutanoyl-CoA + NAD(+) = acetoacetyl-CoA + NADH + H(+). The enzyme catalyses (3S)-hydroxyoctanoyl-CoA + NAD(+) = 3-oxooctanoyl-CoA + NADH + H(+). The catalysed reaction is (3S)-hydroxyhexadecanoyl-CoA + NAD(+) = 3-oxohexadecanoyl-CoA + NADH + H(+). It catalyses the reaction 17beta-hydroxy-5alpha-androstan-3-one + NAD(+) = 5alpha-androstan-3,17-dione + NADH + H(+). It carries out the reaction 5alpha-pregnan-20beta-ol-3-one + NAD(+) = 5alpha-pregnane-3,20-dione + NADH + H(+). The enzyme catalyses 3alpha-hydroxy-5alpha-pregnan-20-one + NAD(+) = 5alpha-pregnane-3,20-dione + NADH + H(+). The catalysed reaction is cortisone + NAD(+) = 17alpha-hydroxypregn-4-en-3,11,20-trione-21-al + NADH + H(+). It catalyses the reaction 11-dehydrocorticosterone + NAD(+) = pregn-4-ene-3,11,20,21-tetraone + NADH + H(+). It carries out the reaction cortisol + NAD(+) = 11beta,17alpha-dihydroxypregn-4-ene-3,20,21-trione + NADH + H(+). The enzyme catalyses chenodeoxycholate + NAD(+) = 7-oxolithocholate + NADH + H(+). The catalysed reaction is ursodeoxycholate + NAD(+) = 7-oxolithocholate + NADH + H(+). It catalyses the reaction 3beta,7beta-dihydroxy-5beta-cholan-24-oate + NAD(+) = 3beta-hydroxy-7-oxo-5beta-cholan-24-oate + NADH + H(+). It participates in amino-acid degradation; L-isoleucine degradation. The protein operates within lipid metabolism; fatty acid beta-oxidation. It functions in the pathway steroid metabolism. Its pathway is lipid metabolism; bile acid biosynthesis. Mitochondrial dehydrogenase involved in pathways of fatty acid, branched-chain amino acid and steroid metabolism. Acts as (S)-3-hydroxyacyl-CoA dehydrogenase in mitochondrial fatty acid beta-oxidation, a major degradation pathway of fatty acids. Catalyzes the third step in the beta-oxidation cycle, namely the reversible conversion of (S)-3-hydroxyacyl-CoA to 3-ketoacyl-CoA. Preferentially accepts straight medium- and short-chain acyl-CoA substrates with highest efficiency for (3S)-hydroxybutanoyl-CoA. Acts as 3-hydroxy-2-methylbutyryl-CoA dehydrogenase in branched-chain amino acid catabolic pathway. Catalyzes the oxidation of 3-hydroxy-2-methylbutanoyl-CoA into 2-methyl-3-oxobutanoyl-CoA, a step in isoleucine degradation pathway. Has hydroxysteroid dehydrogenase activity toward steroid hormones and bile acids. Catalyzes the oxidation of 3alpha-, 17beta-, 20beta- and 21-hydroxysteroids and 7alpha- and 7beta-hydroxy bile acids. Oxidizes allopregnanolone/brexanolone at the 3alpha-hydroxyl group, which is known to be critical for the activation of gamma-aminobutyric acid receptors (GABAARs) chloride channel. Has phospholipase C-like activity toward cardiolipin and its oxidized species. Likely oxidizes the 2'-hydroxyl in the head group of cardiolipin to form a ketone intermediate that undergoes nucleophilic attack by water and fragments into diacylglycerol, dihydroxyacetone and orthophosphate. Has higher affinity for cardiolipin with oxidized fatty acids and may degrade these species during the oxidative stress response to protect cells from apoptosis. By interacting with intracellular amyloid-beta, it may contribute to the neuronal dysfunction associated with Alzheimer disease (AD). Essential for structural and functional integrity of mitochondria. Its function is as follows. In addition to mitochondrial dehydrogenase activity, moonlights as a component of mitochondrial ribonuclease P, a complex that cleaves tRNA molecules in their 5'-ends. Together with TRMT10C/MRPP1, forms a subcomplex of the mitochondrial ribonuclease P, named MRPP1-MRPP2 subcomplex, which displays functions that are independent of the ribonuclease P activity. The MRPP1-MRPP2 subcomplex catalyzes the formation of N(1)-methylguanine and N(1)-methyladenine at position 9 (m1G9 and m1A9, respectively) in tRNAs; HSD17B10/MRPP2 acting as a non-catalytic subunit. The MRPP1-MRPP2 subcomplex also acts as a tRNA maturation platform: following 5'-end cleavage by the mitochondrial ribonuclease P complex, the MRPP1-MRPP2 subcomplex enhances the efficiency of 3'-processing catalyzed by ELAC2, retains the tRNA product after ELAC2 processing and presents the nascent tRNA to the mitochondrial CCA tRNA nucleotidyltransferase TRNT1 enzyme. Associates with mitochondrial DNA complexes at the nucleoids to initiate RNA processing and ribosome assembly. This chain is 3-hydroxyacyl-CoA dehydrogenase type-2 (Hsd17b10), found in Rattus norvegicus (Rat).